We begin with the raw amino-acid sequence, 458 residues long: tRNA-2-methylthio-N(6)-dimethylallyladenosine synthase (458 aa).

The MTTase N-terminal domain occupies 15–134 (KKVFIKTYGC…LPDLLEQTKQ (120 aa)). [4Fe-4S] cluster-binding residues include C24, C60, C97, C175, C179, and C182. The Radical SAM core domain maps to 161-393 (RKRGVSAFLT…QVLLLEQQNA (233 aa)). The 62-residue stretch at 396–457 (RSKIGQTTDV…SNSFVGEIAN (62 aa)) folds into the TRAM domain.

This sequence belongs to the methylthiotransferase family. MiaB subfamily. As to quaternary structure, monomer. The cofactor is [4Fe-4S] cluster.

Its subcellular location is the cytoplasm. It catalyses the reaction N(6)-dimethylallyladenosine(37) in tRNA + (sulfur carrier)-SH + AH2 + 2 S-adenosyl-L-methionine = 2-methylsulfanyl-N(6)-dimethylallyladenosine(37) in tRNA + (sulfur carrier)-H + 5'-deoxyadenosine + L-methionine + A + S-adenosyl-L-homocysteine + 2 H(+). Catalyzes the methylthiolation of N6-(dimethylallyl)adenosine (i(6)A), leading to the formation of 2-methylthio-N6-(dimethylallyl)adenosine (ms(2)i(6)A) at position 37 in tRNAs that read codons beginning with uridine. In Bartonella quintana (strain Toulouse) (Rochalimaea quintana), this protein is tRNA-2-methylthio-N(6)-dimethylallyladenosine synthase.